Consider the following 105-residue polypeptide: Met repressor (105 aa).

Belongs to the MetJ family. As to quaternary structure, homodimer.

The protein localises to the cytoplasm. This regulatory protein, when combined with SAM (S-adenosylmethionine) represses the expression of the methionine regulon and of enzymes involved in SAM synthesis. The protein is Met repressor of Histophilus somni (strain 129Pt) (Haemophilus somnus).